Reading from the N-terminus, the 309-residue chain is Pyridoxal 5'-phosphate synthase subunit PDX1.3 (309 aa).

Residue methionine 1 is modified to N-acetylmethionine. Aspartate 40 is a D-ribose 5-phosphate binding site. The Schiff-base intermediate with D-ribose 5-phosphate role is filled by lysine 97. Glycine 169 is a D-ribose 5-phosphate binding site. Residue arginine 181 coordinates D-glyceraldehyde 3-phosphate. Residues glycine 230 and 251–252 contribute to the D-ribose 5-phosphate site; that span reads GS.

The protein belongs to the PdxS/SNZ family. In terms of assembly, homodimer or heterodimer with PDX1.1 or PDX1.2. Interacts with PDX2. Expressed in cotyledons, rapidly dividing root stele tissues, stems, leaves, flowers, mature pollen, and siliques.

The protein resides in the cytoplasm. Its subcellular location is the cell membrane. The protein localises to the membrane. The enzyme catalyses aldehydo-D-ribose 5-phosphate + D-glyceraldehyde 3-phosphate + L-glutamine = pyridoxal 5'-phosphate + L-glutamate + phosphate + 3 H2O + H(+). The protein operates within cofactor biosynthesis; pyridoxal 5'-phosphate biosynthesis. In terms of biological role, catalyzes the formation of pyridoxal 5'-phosphate from ribose 5-phosphate (RBP), glyceraldehyde 3-phosphate (G3P) and ammonia. The ammonia is provided by PDX2. Can also use ribulose 5-phosphate and dihydroxyacetone phosphate as substrates, resulting from enzyme-catalyzed isomerization of RBP and G3P, respectively. Also plays an indirect role in resistance to singlet oxygen-generating photosensitizers. This chain is Pyridoxal 5'-phosphate synthase subunit PDX1.3 (PDX13), found in Arabidopsis thaliana (Mouse-ear cress).